Consider the following 58-residue polypeptide: Large ribosomal subunit protein uL30 (58 aa).

The protein belongs to the universal ribosomal protein uL30 family. In terms of assembly, part of the 50S ribosomal subunit.

The polypeptide is Large ribosomal subunit protein uL30 (Novosphingobium aromaticivorans (strain ATCC 700278 / DSM 12444 / CCUG 56034 / CIP 105152 / NBRC 16084 / F199)).